Consider the following 301-residue polypeptide: ATP synthase gamma chain (301 aa).

This sequence belongs to the ATPase gamma chain family. In terms of assembly, F-type ATPases have 2 components, CF(1) - the catalytic core - and CF(0) - the membrane proton channel. CF(1) has five subunits: alpha(3), beta(3), gamma(1), delta(1), epsilon(1). CF(0) has three main subunits: a, b and c.

Its subcellular location is the cell inner membrane. Its function is as follows. Produces ATP from ADP in the presence of a proton gradient across the membrane. The gamma chain is believed to be important in regulating ATPase activity and the flow of protons through the CF(0) complex. The sequence is that of ATP synthase gamma chain from Bordetella pertussis (strain Tohama I / ATCC BAA-589 / NCTC 13251).